A 132-amino-acid polypeptide reads, in one-letter code: Small ribosomal subunit protein uS8 (132 aa).

Belongs to the universal ribosomal protein uS8 family. As to quaternary structure, part of the 30S ribosomal subunit. Contacts proteins S5 and S12.

Its function is as follows. One of the primary rRNA binding proteins, it binds directly to 16S rRNA central domain where it helps coordinate assembly of the platform of the 30S subunit. This is Small ribosomal subunit protein uS8 from Desulfitobacterium hafniense (strain DSM 10664 / DCB-2).